The chain runs to 1063 residues: ATP-dependent helicase hrq1 (1063 aa).

The tract at residues 224–243 is disordered; the sequence is TQSRKNQPVPPDSPSIPNDS. A Helicase ATP-binding domain is found at 320–503; the sequence is INHLWNGFHV…KIFGVDNIKL (184 aa). Position 333 to 340 (333 to 340) interacts with ATP; that stretch reads TSTSSGKS. Residues 444–447 carry the DEAH box motif; it reads DEAH. The 179-residue stretch at 539 to 717 folds into the Helicase C-terminal domain; the sequence is EASKLLIKFA…ELPINIRSDE (179 aa).

It belongs to the helicase family. HRQ1 subfamily. Forms heptamer rings. Interacts with rhp14. Requires Mg(2+) as cofactor.

The protein localises to the nucleus. The catalysed reaction is Couples ATP hydrolysis with the unwinding of duplex DNA by translocating in the 3'-5' direction.. It catalyses the reaction ATP + H2O = ADP + phosphate + H(+). Functionally, helicase with 3'-5' helicase activity involved in genome stability. Functions in the nucleotide excision repair (NER) pathway and plays a critical role in DNA interstrand cross-link repair. Unwinds relatively long duplex DNA up to 120-bp and requires a long 3'-tail of at least 70 nucleotides for efficient unwinding of duplex DNA. Shows both processive helicase and DNA strand annealing activities. Affects telomere length by a non-catalytic mechanism, probably through inhibiting telomerase by competing with it for ssDNA binding. The chain is ATP-dependent helicase hrq1 from Schizosaccharomyces pombe (strain 972 / ATCC 24843) (Fission yeast).